Here is a 567-residue protein sequence, read N- to C-terminus: Myo-inositol transporter 1 (567 aa).

The Cytoplasmic segment spans residues 1-88; it reads MSARPAQPNI…KFVWMLVSAA (88 aa). Residues 14-42 are disordered; the sequence is IRTSLSGYPSPTHSGSSTPASLEFSDGRL. A compositionally biased stretch (polar residues) spans 16–33; the sequence is TSLSGYPSPTHSGSSTPA. Residues 89-109 form a helical membrane-spanning segment; it reads AISGLLFGYDTAAISGMLVII. Topologically, residues 110-123 are extracellular; that stretch reads KDDLGTILSSWQKE. Residues 124-144 traverse the membrane as a helical segment; that stretch reads VITSATTLGALLGGLAAGCVS. The Cytoplasmic segment spans residues 145 to 150; sequence DFTGRR. Residues 151–171 form a helical membrane-spanning segment; sequence LVIVFANVAFIGGSICQAACH. The Extracellular segment spans residues 172–180; it reads TVAAMIAGR. Residues 181–201 traverse the membrane as a helical segment; the sequence is FIVGLGVGLASCIVPLYIGEL. Residues 202–209 are Cytoplasmic-facing; that stretch reads APTMIRGR. The chain crosses the membrane as a helical span at residues 210-230; that stretch reads LVTINCVAVTLGQVVAYAIGA. Residues 231–240 are Extracellular-facing; that stretch reads SFQNVHNGWR. The chain crosses the membrane as a helical span at residues 241–261; the sequence is WIVGLGAMPSFVQLAAIGFLP. Topologically, residues 262-343 are cytoplasmic; that stretch reads ESPRILLLRS…IGCGLQAAQQ (82 aa). A helical transmembrane segment spans residues 344-364; the sequence is LCGFNTLMYYSATIFAMLGFN. A glycan (N-linked (GlcNAc...) asparagine) is linked at Asn365. Residues 365-367 lie on the Extracellular side of the membrane; it reads NAT. Residues 368–388 form a helical membrane-spanning segment; it reads AVGLIVATVNVLFTLVALKIV. Residues 389–397 lie on the Cytoplasmic side of the membrane; sequence DPVGRRRTM. Residues 398 to 418 traverse the membrane as a helical segment; that stretch reads LFTLPIMILALVFAAIFFYYL. The Extracellular portion of the chain corresponds to 419–435; it reads TLSTNGILIEDHDYPRS. The helical transmembrane segment at 436–456 threads the bilayer; that stretch reads LSILVLLSMLLYVAGYATGLG. Residues 457–476 lie on the Cytoplasmic side of the membrane; it reads NIPWQQGELFRLEVRGIGTS. Residues 477 to 497 traverse the membrane as a helical segment; the sequence is ICTAVNWSCNMLIAGTFLSLM. At 498–503 the chain is on the extracellular side; sequence DAATPS. A helical membrane pass occupies residues 504 to 524; that stretch reads GAFGIYAGFCVIGWVFCWMLY. Topologically, residues 525–567 are cytoplasmic; it reads PETSGLSLEEVYFVFEEGFGIKKSQQLRKQKLVEAAKLKAIFE.

Belongs to the major facilitator superfamily. Sugar transporter (TC 2.A.1.1) family.

It localises to the cell membrane. It carries out the reaction myo-inositol(out) + H(+)(out) = myo-inositol(in) + H(+)(in). Its function is as follows. May function as a transporter or as a sensor for myo-inositol. The chain is Myo-inositol transporter 1 from Cryptococcus neoformans var. grubii serotype A (strain H99 / ATCC 208821 / CBS 10515 / FGSC 9487) (Filobasidiella neoformans var. grubii).